The following is a 155-amino-acid chain: Glycosylation-dependent cell adhesion molecule 1 (155 aa).

Residues 1–18 form the signal peptide; the sequence is MKFFAVLLLASLAATSLA. Residue Thr34 is glycosylated (O-linked (GalNAc...) threonine). Ser48, Ser53, Ser57, Ser59, and Ser65 each carry phosphoserine. The disordered stretch occupies residues 74–109; that stretch reads ARRHQNQNPKLLHPVPQESSFRNTATQSEETKELTP. Polar residues predominate over residues 90–101; the sequence is QESSFRNTATQS.

It belongs to the PP3/GlyCAM-1 family. Highly expressed in whey fraction of camel milk.

The sequence is that of Glycosylation-dependent cell adhesion molecule 1 (GLYCAM1) from Camelus dromedarius (Dromedary).